Here is a 644-residue protein sequence, read N- to C-terminus: Zinc transporter ZIP4 (644 aa).

The N-terminal stretch at 1–27 (MAILAWLEPRPLLAVLVLVLTMRMAQP) is a signal peptide. Residues 28–323 (AHLLTLLSSG…QNQLSQAEKY (296 aa)) are Extracellular-facing. 3 disulfide bridges follow: Cys59-Cys64, Cys67-Cys103, and Cys153-Cys188. The tract at residues 231-259 (TETHSDHHHQEKRVNRQGPTPLTAPNSSS) is disordered. Basic and acidic residues predominate over residues 233 to 244 (THSDHHHQEKRV). Residues 247-259 (QGPTPLTAPNSSS) show a composition bias toward polar residues. Cysteines 266 and 305 form a disulfide. Residues 324–344 (LYGSLATLLICLCSTFGLLLL) form a helical membrane-spanning segment. The Cytoplasmic segment spans residues 345–355 (TCAACSTAAHY). Residues 356 to 376 (VIQTFLGMAVGALTGDALLHL) form a helical membrane-spanning segment. The Extracellular portion of the chain corresponds to 377–404 (TPKVLGLHQHGGDSEHRADSHGPQTTWR). Residues 405 to 425 (LVVALSGLYVFFLFEKLCDLL) traverse the membrane as a helical segment. Residues 426-495 (LPQDPEDRKG…KSPELRLLPY (70 aa)) are Cytoplasmic-facing. The Essential for SLC39A4 endocytosis signature appears at 449-451 (LQL). A compositionally biased stretch (basic and acidic residues) spans 456–467 (LRPPKQPHEGSR). The disordered stretch occupies residues 456-484 (LRPPKQPHEGSRADLVAEESPELLSPEPR). The helical transmembrane segment at 496–515 (MITLGDGLHNFADGLAVGAA) threads the bilayer. Positions 504, 505, and 508 each coordinate Zn(2+). At 516 to 523 (FASSWKTG) the chain is on the extracellular side. Residues 524-550 (LATSLAVFCHEVPHELGDFAALLHAGL) traverse the membrane as a helical segment. Zn(2+) is bound by residues His533, Glu534, and His537. Residues 551–555 (PVSRA) lie on the Cytoplasmic side of the membrane. A helical transmembrane segment spans residues 556-576 (LLLNLASGLTAFAGLYVALAL). Topologically, residues 577 to 583 (GVGEESE) are extracellular. The helical transmembrane segment at 584–604 (SWTLAVAIGLFLYVALCDMLP) threads the bilayer. The Cytoplasmic portion of the chain corresponds to 605–614 (AMLNVRDPRP). The helical transmembrane segment at 615–635 (WLLFLLHNVGLLGGWAVLLLL) threads the bilayer. At 636-644 (SLYEDSIAL) the chain is on the extracellular side.

It belongs to the ZIP transporter (TC 2.A.5) family. In terms of assembly, homodimer. In terms of processing, the extracellular N-terminal ectodomain is cleaved when cells are Zn(2+) deficient, N-terminally cleaved SLC39A4 is internalized at a faster rate. Post-translationally, under excess Zn(2+) conditions, SLC39A4 on the cell surface is rapidly endocytosed, ubiquitinated and degraded. Glycosylated.

Its subcellular location is the cell membrane. It is found in the recycling endosome membrane. The protein localises to the apical cell membrane. The enzyme catalyses Zn(2+)(in) = Zn(2+)(out). Selective transporter that mediates the uptake of Zn(2+). Plays an essential role for dietary zinc uptake from small intestine. The Zn(2+) uniporter activity is regulated by zinc availability. Also exhibits polyspecific binding and transport of Cu(2+), Cd(2+) and possibly Ni(2+) but at higher concentrations. The protein is Zinc transporter ZIP4 of Pteropus alecto (Black flying fox).